The primary structure comprises 516 residues: Probable inorganic phosphate transporter 1-6 (516 aa).

Ala2 bears the N-acetylalanine mark. The Cytoplasmic segment spans residues 2–25; it reads ANEEQGSILKALDVAKTQWYHVTA. Residues 26 to 46 form a helical membrane-spanning segment; it reads VVVSGMGFFTDSYDLFVISLI. Topologically, residues 47–71 are extracellular; sequence TKLLGRIYYQVPGSSSPGSLPDGIS. Residues 72–92 traverse the membrane as a helical segment; sequence AAVSGVAFAGTFIGQIFFGCL. Residues 93–100 lie on the Cytoplasmic side of the membrane; sequence GDKLGRKR. A helical membrane pass occupies residues 101-121; sequence VYGLTLLIMTICSICSGLSLG. The Extracellular segment spans residues 122-132; sequence RDPKTVMVTLC. A helical transmembrane segment spans residues 133 to 153; that stretch reads FFRFWLGFGIGGDYPLSATIM. Residues 154–162 are Cytoplasmic-facing; sequence SEYSNKRTR. The helical transmembrane segment at 163 to 183 threads the bilayer; that stretch reads GAFIAAVFGMQGIGILAAGAV. Residues 184-212 lie on the Extracellular side of the membrane; sequence SLLVSAVFESKFPSRAYILDGAASTVPQA. The chain crosses the membrane as a helical span at residues 213-233; it reads DYVWRIILMVGALPALLTYYW. The Cytoplasmic segment spans residues 234 to 293; that stretch reads RMKMPETARYTALVSKNAEQAALDMTKVLNVDIEASAAKNDQARVSSDEFGLFSMKFLRR. The chain crosses the membrane as a helical span at residues 294 to 314; that stretch reads HGLHLLGTASTWFLLDIAFYS. Residues 315 to 349 are Extracellular-facing; it reads QNLFQKDIFTTIGWLPSAKTMNAIQELYMIAKAQT. The helical transmembrane segment at 350-370 threads the bilayer; it reads IIACCSTVPGYFFTVGFIDYM. Topologically, residues 371–374 are cytoplasmic; it reads GRKK. Residues 375–395 traverse the membrane as a helical segment; sequence IQIMGFAMMTIFMLSLAIPYH. Topologically, residues 396–403 are extracellular; the sequence is HWTLPANR. The chain crosses the membrane as a helical span at residues 404 to 424; that stretch reads IGFVVLYSFTFFFSNFGPNAT. The Cytoplasmic portion of the chain corresponds to 425-442; it reads TFIVPAEIFPARIRSTCH. The helical transmembrane segment at 443–463 threads the bilayer; that stretch reads GISAASGKAGAMVGSFGFSAL. The Extracellular portion of the chain corresponds to 464–471; the sequence is VKALGMSN. A helical transmembrane segment spans residues 472–492; that stretch reads TLYIMAGINLLGLLLTFTIPE. Topologically, residues 493–516 are cytoplasmic; it reads TNGKSLEELSGETEPEKIKEKIVV.

The protein belongs to the major facilitator superfamily. Phosphate:H(+) symporter (TC 2.A.1.9) family. As to expression, expressed in anthers, tapetumand mature pollen and, to a lower extent, in hydathodes and vascular tissues of cotyledons of flowering plants.

The protein resides in the membrane. Functionally, high-affinity transporter for external inorganic phosphate. This Arabidopsis thaliana (Mouse-ear cress) protein is Probable inorganic phosphate transporter 1-6 (PHT1-6).